Reading from the N-terminus, the 673-residue chain is Citrate exporter 1 (673 aa).

The disordered stretch occupies residues Met1–Leu44. A compositionally biased stretch (polar residues) spans Ser21–Asn39. Residues Phe67–Ile87 form a helical membrane-spanning segment. A glycan (N-linked (GlcNAc...) asparagine) is linked at Asn99. The next 4 helical transmembrane spans lie at Thr103–Gly123, Leu133–Gln153, Phe164–Val184, and Gly194–Phe214. A glycan (N-linked (GlcNAc...) asparagine) is linked at Asn217. Transmembrane regions (helical) follow at residues Ala222–Leu242, Pro261–Gly281, Ile292–Phe312, Ile322–Tyr342, Ala364–Gln384, Leu393–Trp413, Met419–Pro439, and Ser465–Ala485. Asn526 carries N-linked (GlcNAc...) asparagine glycosylation. A helical membrane pass occupies residues His529–Val549. Residues Ala564 to Leu596 are compositionally biased toward basic and acidic residues. Disordered regions lie at residues Ala564–Gly608 and Phe636–Glu673. Residues Asn599 and Asn662 are each glycosylated (N-linked (GlcNAc...) asparagine).

It belongs to the major facilitator superfamily.

It is found in the cell membrane. The enzyme catalyses citrate(in) = citrate(out). Functionally, transmembrane transporter that exports citrate across the cell membrane. The polypeptide is Citrate exporter 1 (Yarrowia lipolytica (strain CLIB 122 / E 150) (Yeast)).